The chain runs to 325 residues: Germination protease (325 aa).

The propeptide occupies 1 to 7 (MYNVRTD).

This sequence belongs to the peptidase A25 family. As to quaternary structure, homotetramer. Autoproteolytically processed. The inactive tetrameric zymogen termed p46 autoprocesses to a smaller form termed p41, which is active only during spore germination.

The enzyme catalyses Endopeptidase action with P4 Glu or Asp, P1 preferably Glu &gt; Asp, P1' hydrophobic and P2' Ala.. Functionally, initiates the rapid degradation of small, acid-soluble proteins during spore germination. The sequence is that of Germination protease from Clostridium perfringens (strain SM101 / Type A).